A 571-amino-acid polypeptide reads, in one-letter code: S100P-binding protein (571 aa).

Over residues 270-280 (SDIPFDGDIDE) the composition is skewed to acidic residues. 2 disordered regions span residues 270–312 (SDIP…LESV) and 356–385 (NGQN…CSQS). The span at 299 to 309 (TSESTPASSEL) shows a compositional bias: polar residues. Positions 365–378 (PLPPSDTAPGPQLP) are enriched in pro residues.

It localises to the nucleus. This chain is S100P-binding protein (s100pbp), found in Xenopus tropicalis (Western clawed frog).